The chain runs to 247 residues: Carboxy-S-adenosyl-L-methionine synthase (247 aa).

S-adenosyl-L-methionine-binding positions include Tyr-40, 65-67 (GAS), 90-91 (DN), 122-123 (DI), Asn-137, and Arg-204.

It belongs to the class I-like SAM-binding methyltransferase superfamily. Cx-SAM synthase family. In terms of assembly, homodimer.

The catalysed reaction is prephenate + S-adenosyl-L-methionine = carboxy-S-adenosyl-L-methionine + 3-phenylpyruvate + H2O. Its function is as follows. Catalyzes the conversion of S-adenosyl-L-methionine (SAM) to carboxy-S-adenosyl-L-methionine (Cx-SAM). The sequence is that of Carboxy-S-adenosyl-L-methionine synthase from Ectopseudomonas mendocina (strain ymp) (Pseudomonas mendocina).